A 322-amino-acid polypeptide reads, in one-letter code: NADH-quinone oxidoreductase subunit H (322 aa).

The next 8 membrane-spanning stretches (helical) occupy residues 12 to 32 (IGKA…MSFI), 79 to 99 (IFIL…AVVP), 111 to 131 (VGLL…LFAG), 151 to 171 (LSYE…TGSF), 183 to 203 (LWNV…GVAV), 234 to 254 (FFVG…TLFF), 262 to 282 (LPPF…FILL), and 301 to 321 (VCLP…LMNV).

This sequence belongs to the complex I subunit 1 family. NDH-1 is composed of 13 different subunits. Subunits NuoA, H, J, K, L, M, N constitute the membrane sector of the complex.

The protein resides in the cell inner membrane. The catalysed reaction is a quinone + NADH + 5 H(+)(in) = a quinol + NAD(+) + 4 H(+)(out). NDH-1 shuttles electrons from NADH, via FMN and iron-sulfur (Fe-S) centers, to quinones in the respiratory chain. The immediate electron acceptor for the enzyme in this species is believed to be ubiquinone. Couples the redox reaction to proton translocation (for every two electrons transferred, four hydrogen ions are translocated across the cytoplasmic membrane), and thus conserves the redox energy in a proton gradient. This subunit may bind ubiquinone. This is NADH-quinone oxidoreductase subunit H from Shewanella oneidensis (strain ATCC 700550 / JCM 31522 / CIP 106686 / LMG 19005 / NCIMB 14063 / MR-1).